A 333-amino-acid polypeptide reads, in one-letter code: Taste receptor type 2 member 38 (333 aa).

Residues 1-17 lie on the Extracellular side of the membrane; that stretch reads MLTLTHICTVSYEVRST. Residues 18–38 traverse the membrane as a helical segment; the sequence is FLFISVLEFAVGFLTNAFISL. At 39 to 55 the chain is on the cytoplasmic side; sequence VNFWDVVKRQPLSNSDC. Residues 56-76 traverse the membrane as a helical segment; sequence VLLCLSISRLFLHGLLFLSAI. The Extracellular portion of the chain corresponds to 77 to 94; sequence QLTHFQKLSEPLNHSYQV. A helical membrane pass occupies residues 95-115; it reads ILMLWMIANQANLWLAACLSL. Over 116–142 the chain is Cytoplasmic; sequence LYCSKLIRFSHTFLICLASWVSRKISQ. A helical membrane pass occupies residues 143-163; it reads MLLGIILCSCICTVLCVWCFF. Residues 164–190 are Extracellular-facing; the sequence is GRLHFTVTTVLFMNNNTRLNWQIKDLN. Residue asparagine 178 is glycosylated (N-linked (GlcNAc...) asparagine). The chain crosses the membrane as a helical span at residues 191–211; the sequence is LFYSFLFCYLWSVPPFLLFLV. Over 212-251 the chain is Cytoplasmic; that stretch reads SSGMLTVSLGRHMRTMKVYTRDSRDPSLEAHIKALKSLVS. The chain crosses the membrane as a helical span at residues 252–272; sequence FFCFFVISSCAAFISVPLLIL. Topologically, residues 273-276 are extracellular; that stretch reads WHDK. A helical transmembrane segment spans residues 277–297; that stretch reads IGVMVCVGIMAACPSGHAAVL. Topologically, residues 298 to 333 are cytoplasmic; sequence ISGNAKLRRAVTTILLWAQSSLKVRADHMADSRTLC.

Belongs to the G-protein coupled receptor T2R family.

It localises to the membrane. Functionally, receptor that may play a role in the perception of bitterness and is gustducin-linked. May play a role in sensing the chemical composition of the gastrointestinal content. The activity of this receptor may stimulate alpha gustducin, mediate PLC-beta-2 activation and lead to the gating of TRPM5. The protein is Taste receptor type 2 member 38 (TAS2R38) of Papio hamadryas (Hamadryas baboon).